The sequence spans 338 residues: MREPAFWYRPRSPESQILRPLGALYGAITARRMALQGFDAGIPVICVGNYHVGGAGKTPTVLALTKLLRELGETPVVLSRGYGGRLQGPVMVDGARHIAADVGDEPLMMARDVPVVVARDRLDGVALAKSQGATVILMDDGFQNPRLLKDASLIVIDSERGIGNGKVFPAGPLRAPLKAQLARTDALVLIGDGRAANDVAAELAKRNKPELRARLKPDAASVAQLFGKRVFAFAGIGDPERFFRTLRASGIDVARTRRFDDHHMFSPEEIAALAAEAQREQLTLVTTEKDLARLRGSEGVPNGIVPFAVQLEFDDPAKLRQLISDHLYKARERRFGRR.

Residue 51–58 (HVGGAGKT) coordinates ATP.

This sequence belongs to the LpxK family.

It carries out the reaction a lipid A disaccharide + ATP = a lipid IVA + ADP + H(+). Its pathway is glycolipid biosynthesis; lipid IV(A) biosynthesis; lipid IV(A) from (3R)-3-hydroxytetradecanoyl-[acyl-carrier-protein] and UDP-N-acetyl-alpha-D-glucosamine: step 6/6. In terms of biological role, transfers the gamma-phosphate of ATP to the 4'-position of a tetraacyldisaccharide 1-phosphate intermediate (termed DS-1-P) to form tetraacyldisaccharide 1,4'-bis-phosphate (lipid IVA). The protein is Tetraacyldisaccharide 4'-kinase of Bradyrhizobium diazoefficiens (strain JCM 10833 / BCRC 13528 / IAM 13628 / NBRC 14792 / USDA 110).